Here is a 106-residue protein sequence, read N- to C-terminus: Ig kappa-b4 chain C region (106 aa).

An Ig-like domain is found at 6–99 (PSVLLFPPSK…VQGSASPIVQ (94 aa)). Cysteine 27 and cysteine 87 are disulfide-bonded. A compositionally biased stretch (polar residues) spans 48-64 (QQSGIENSKTPQSPEDN). The disordered stretch occupies residues 48–67 (QQSGIENSKTPQSPEDNTYS).

This Oryctolagus cuniculus (Rabbit) protein is Ig kappa-b4 chain C region (K-BAS).